Here is a 403-residue protein sequence, read N- to C-terminus: MGRAKKVVLAYSGGVDTSVCIPYLKQEWGVEEVITFAADLGQGDELEPIRQKALDAGASQSLVGDLIQPFIEDFAFPAIRANALYEGRYPLSTALARPLIAKRLVEVAREVGADAVAHGCTGKGNDQVRFDVAIASLAPDLKVLTPAREWGMSREETIAYGERFGMPSPVSKKSPYSIDLNLLGRSIEAGPLEDPMVAPPEEVFAMTRSITDAPDAFEEIEIRFESGNPVAINGQSLDPVAMIREANRLAGTHGIGRLDMIENRVVGIKSREIYETPGLLLLIQAHQELESLTLAADVLRSKRQLEMQWSDLVYQGLWFGPLKEALDGFMDRTQEHVNGVVRLRLHKGNATVIGRGSSDSSLYVPEMASYGSEDQFDHRAAEGFIYVWGLPIRLWAASKRSSR.

Residues Ala-10–Ser-18 and Ala-38 contribute to the ATP site. Tyr-89 contributes to the L-citrulline binding site. Gly-119 contacts ATP. Residues Thr-121, Asn-125, and Asp-126 each contribute to the L-aspartate site. Asn-125 is a binding site for L-citrulline. Arg-129, Ser-177, Ser-186, Glu-262, and Tyr-274 together coordinate L-citrulline.

The protein belongs to the argininosuccinate synthase family. Type 1 subfamily. As to quaternary structure, homotetramer.

The protein localises to the cytoplasm. It catalyses the reaction L-citrulline + L-aspartate + ATP = 2-(N(omega)-L-arginino)succinate + AMP + diphosphate + H(+). It functions in the pathway amino-acid biosynthesis; L-arginine biosynthesis; L-arginine from L-ornithine and carbamoyl phosphate: step 2/3. The polypeptide is Argininosuccinate synthase (Synechococcus sp. (strain CC9902)).